The following is a 611-amino-acid chain: Probable potassium transport system protein Kup 1 (611 aa).

Transmembrane regions (helical) follow at residues 6-26, 44-64, 90-110, 129-149, 158-178, 193-213, 237-257, 280-300, 328-348, 354-374, 385-405, and 410-430; these read LMVG…LYTM, MLSL…VAVV, LGVI…GAIT, ISPY…ALQA, LFGP…LFGI, GLSY…AVFL, WYGL…AVVV, LVAL…SGAF, IYIG…TLGF, LAAA…ILMF, LAAS…FVSA, and VLEG…LMMT.

This sequence belongs to the HAK/KUP transporter (TC 2.A.72) family.

It localises to the cell inner membrane. The enzyme catalyses K(+)(in) + H(+)(in) = K(+)(out) + H(+)(out). Its function is as follows. Transport of potassium into the cell. Likely operates as a K(+):H(+) symporter. The sequence is that of Probable potassium transport system protein Kup 1 from Bradyrhizobium sp. (strain BTAi1 / ATCC BAA-1182).